A 662-amino-acid chain; its full sequence is Bifunctional polymyxin resistance protein ArnA (662 aa).

The formyltransferase ArnAFT stretch occupies residues 1–307 (MTSKAVVFAY…ELGLVEGARL (307 aa)). The Proton donor; for formyltransferase activity role is filled by His-106. Residues Arg-116 and 138 to 142 (IERAD) contribute to the (6R)-10-formyltetrahydrofolate site. Positions 316-662 (RRTRVLILGV…EALREREAQA (347 aa)) are dehydrogenase ArnADH. NAD(+) is bound by residues Asp-349 and 370–371 (DI). Residues Ala-395, Tyr-400, and 434–435 (TS) contribute to the UDP-alpha-D-glucuronate site. Residue Glu-436 is the Proton acceptor; for decarboxylase activity of the active site. Residues Arg-462, Asn-493, 527 to 536 (RLVDGGAQKR), and Tyr-614 each bind UDP-alpha-D-glucuronate. Arg-620 (proton donor; for decarboxylase activity) is an active-site residue.

It in the N-terminal section; belongs to the Fmt family. UDP-L-Ara4N formyltransferase subfamily. The protein in the C-terminal section; belongs to the NAD(P)-dependent epimerase/dehydratase family. UDP-glucuronic acid decarboxylase subfamily. In terms of assembly, homohexamer, formed by a dimer of trimers.

The catalysed reaction is UDP-alpha-D-glucuronate + NAD(+) = UDP-beta-L-threo-pentopyranos-4-ulose + CO2 + NADH. It catalyses the reaction UDP-4-amino-4-deoxy-beta-L-arabinose + (6R)-10-formyltetrahydrofolate = UDP-4-deoxy-4-formamido-beta-L-arabinose + (6S)-5,6,7,8-tetrahydrofolate + H(+). It functions in the pathway nucleotide-sugar biosynthesis; UDP-4-deoxy-4-formamido-beta-L-arabinose biosynthesis; UDP-4-deoxy-4-formamido-beta-L-arabinose from UDP-alpha-D-glucuronate: step 1/3. Its pathway is nucleotide-sugar biosynthesis; UDP-4-deoxy-4-formamido-beta-L-arabinose biosynthesis; UDP-4-deoxy-4-formamido-beta-L-arabinose from UDP-alpha-D-glucuronate: step 3/3. It participates in bacterial outer membrane biogenesis; lipopolysaccharide biosynthesis. Functionally, bifunctional enzyme that catalyzes the oxidative decarboxylation of UDP-glucuronic acid (UDP-GlcUA) to UDP-4-keto-arabinose (UDP-Ara4O) and the addition of a formyl group to UDP-4-amino-4-deoxy-L-arabinose (UDP-L-Ara4N) to form UDP-L-4-formamido-arabinose (UDP-L-Ara4FN). The modified arabinose is attached to lipid A and is required for resistance to polymyxin and cationic antimicrobial peptides. The sequence is that of Bifunctional polymyxin resistance protein ArnA from Pseudomonas aeruginosa (strain ATCC 15692 / DSM 22644 / CIP 104116 / JCM 14847 / LMG 12228 / 1C / PRS 101 / PAO1).